The following is a 432-amino-acid chain: Enolase (432 aa).

A (2R)-2-phosphoglycerate-binding site is contributed by Gln-168. Catalysis depends on Glu-210, which acts as the Proton donor. Asp-247, Glu-288, and Asp-315 together coordinate Mg(2+). (2R)-2-phosphoglycerate-binding residues include Lys-340, Arg-369, Ser-370, and Lys-391. The active-site Proton acceptor is Lys-340.

Belongs to the enolase family. Mg(2+) is required as a cofactor.

Its subcellular location is the cytoplasm. The protein resides in the secreted. The protein localises to the cell surface. The enzyme catalyses (2R)-2-phosphoglycerate = phosphoenolpyruvate + H2O. Its pathway is carbohydrate degradation; glycolysis; pyruvate from D-glyceraldehyde 3-phosphate: step 4/5. Catalyzes the reversible conversion of 2-phosphoglycerate (2-PG) into phosphoenolpyruvate (PEP). It is essential for the degradation of carbohydrates via glycolysis. This Microcystis aeruginosa (strain NIES-843 / IAM M-2473) protein is Enolase.